The following is a 250-amino-acid chain: Ino eighty subunit 3 (250 aa).

The tract at residues 29-70 (PDFLEKDPHHKKFHNADGLNQQGSSTPSTATDANAASTASTH) is disordered. Residues 52–70 (SSTPSTATDANAASTASTH) show a composition bias toward low complexity. Residues serine 157 and serine 211 each carry the phosphoserine modification.

As to quaternary structure, component of the chromatin-remodeling INO80 complex, at least composed of ARP4, ARP5, ARP8, RVB1, RVB2, TAF14, NHP10, IES1, IES3, IES4, IES6, ACT1, IES2, IES5 and INO80.

The protein resides in the nucleus. In terms of biological role, probably involved in transcription regulation via its interaction with the INO80 complex, a chromatin-remodeling complex. The sequence is that of Ino eighty subunit 3 (IES3) from Saccharomyces cerevisiae (strain ATCC 204508 / S288c) (Baker's yeast).